We begin with the raw amino-acid sequence, 201 residues long: Histidinol dehydrogenase (201 aa).

The protein belongs to the histidinol dehydrogenase family. In terms of assembly, homodimer. Zn(2+) serves as cofactor.

The enzyme catalyses L-histidinol + 2 NAD(+) + H2O = L-histidine + 2 NADH + 3 H(+). It functions in the pathway amino-acid biosynthesis; L-histidine biosynthesis; L-histidine from 5-phospho-alpha-D-ribose 1-diphosphate: step 9/9. In terms of biological role, catalyzes the sequential NAD-dependent oxidations of L-histidinol to L-histidinaldehyde and then to L-histidine. The chain is Histidinol dehydrogenase (hisD) from Buchnera aphidicola subsp. Schlechtendalia chinensis.